The following is a 1102-amino-acid chain: Carbamoyl phosphate synthase large chain (1102 aa).

Residues methionine 1–glutamate 408 form a carboxyphosphate synthetic domain region. 12 residues coordinate ATP: arginine 129, arginine 175, glycine 181, glycine 182, glutamate 214, isoleucine 216, glutamate 221, glycine 247, valine 248, histidine 249, glutamine 291, and glutamate 305. The region spanning glutamate 137–valine 334 is the ATP-grasp 1 domain. Glutamine 291, glutamate 305, and asparagine 307 together coordinate Mg(2+). Glutamine 291, glutamate 305, and asparagine 307 together coordinate Mn(2+). Positions lysine 409–serine 551 are oligomerization domain. The tract at residues glutamate 552 to tyrosine 954 is carbamoyl phosphate synthetic domain. In terms of domain architecture, ATP-grasp 2 spans glycine 682–leucine 873. The ATP site is built by arginine 718, arginine 757, leucine 759, glutamate 764, glycine 789, isoleucine 790, histidine 791, serine 792, glutamine 832, and glutamate 844. Glutamine 832, glutamate 844, and asparagine 846 together coordinate Mg(2+). Mn(2+) is bound by residues glutamine 832, glutamate 844, and asparagine 846. Positions glycine 955–alanine 1100 constitute an MGS-like domain. The allosteric domain stretch occupies residues glycine 955 to aspartate 1102.

It belongs to the CarB family. As to quaternary structure, composed of two chains; the small (or glutamine) chain promotes the hydrolysis of glutamine to ammonia, which is used by the large (or ammonia) chain to synthesize carbamoyl phosphate. Tetramer of heterodimers (alpha,beta)4. Mg(2+) serves as cofactor. It depends on Mn(2+) as a cofactor.

The enzyme catalyses hydrogencarbonate + L-glutamine + 2 ATP + H2O = carbamoyl phosphate + L-glutamate + 2 ADP + phosphate + 2 H(+). The catalysed reaction is hydrogencarbonate + NH4(+) + 2 ATP = carbamoyl phosphate + 2 ADP + phosphate + 2 H(+). It functions in the pathway amino-acid biosynthesis; L-arginine biosynthesis; carbamoyl phosphate from bicarbonate: step 1/1. The protein operates within pyrimidine metabolism; UMP biosynthesis via de novo pathway; (S)-dihydroorotate from bicarbonate: step 1/3. Its function is as follows. Large subunit of the glutamine-dependent carbamoyl phosphate synthetase (CPSase). CPSase catalyzes the formation of carbamoyl phosphate from the ammonia moiety of glutamine, carbonate, and phosphate donated by ATP, constituting the first step of 2 biosynthetic pathways, one leading to arginine and/or urea and the other to pyrimidine nucleotides. The large subunit (synthetase) binds the substrates ammonia (free or transferred from glutamine from the small subunit), hydrogencarbonate and ATP and carries out an ATP-coupled ligase reaction, activating hydrogencarbonate by forming carboxy phosphate which reacts with ammonia to form carbamoyl phosphate. This chain is Carbamoyl phosphate synthase large chain, found in Streptomyces coelicolor (strain ATCC BAA-471 / A3(2) / M145).